Here is a 400-residue protein sequence, read N- to C-terminus: Enoyl-[acyl-carrier-protein] reductase [NADH] (400 aa).

NAD(+) is bound by residues 48–53, 74–75, 111–112, and 139–140; these read GSSSGY, FE, DA, and LA. Y225 lines the substrate pocket. Residue Y235 is the Proton donor of the active site. NAD(+)-binding positions include K244 and 273–275; that span reads VVT.

Belongs to the TER reductase family. Monomer.

It catalyses the reaction a 2,3-saturated acyl-[ACP] + NAD(+) = a (2E)-enoyl-[ACP] + NADH + H(+). It participates in lipid metabolism; fatty acid biosynthesis. Its function is as follows. Involved in the final reduction of the elongation cycle of fatty acid synthesis (FAS II). Catalyzes the reduction of a carbon-carbon double bond in an enoyl moiety that is covalently linked to an acyl carrier protein (ACP). This chain is Enoyl-[acyl-carrier-protein] reductase [NADH], found in Shewanella oneidensis (strain ATCC 700550 / JCM 31522 / CIP 106686 / LMG 19005 / NCIMB 14063 / MR-1).